Reading from the N-terminus, the 284-residue chain is Tropomyosin beta chain (284 aa).

Met1 bears the N-acetylmethionine mark. The stretch at 1-284 (MEAIKKKMQM…DNALNDITSL (284 aa)) forms a coiled coil. 2 stretches are compositionally biased toward basic and acidic residues: residues 22 to 40 (AEQAEADKKQAEDRCKQLE) and 51 to 66 (KGTEDEVEKYSESVKE). The interval 22-66 (AEQAEADKKQAEDRCKQLEEEQQGLQKKLKGTEDEVEKYSESVKE) is disordered.

The protein belongs to the tropomyosin family. In terms of assembly, homodimer. Heterodimer of an alpha (TPM1, TPM3 or TPM4) and a beta (TPM2) chain.

It localises to the cytoplasm. It is found in the cytoskeleton. In terms of biological role, binds to actin filaments in muscle and non-muscle cells. Plays a central role, in association with the troponin complex, in the calcium dependent regulation of vertebrate striated muscle contraction. Smooth muscle contraction is regulated by interaction with caldesmon. In non-muscle cells is implicated in stabilizing cytoskeleton actin filaments. The polypeptide is Tropomyosin beta chain (TPM2) (Gallus gallus (Chicken)).